Here is an 84-residue protein sequence, read N- to C-terminus: UPF0457 protein BC_3525 (84 aa).

The protein belongs to the UPF0457 family.

The polypeptide is UPF0457 protein BC_3525 (Bacillus cereus (strain ATCC 14579 / DSM 31 / CCUG 7414 / JCM 2152 / NBRC 15305 / NCIMB 9373 / NCTC 2599 / NRRL B-3711)).